The sequence spans 488 residues: GTPase Der (488 aa).

EngA-type G domains are found at residues 3-166 (PVVA…AEAM) and 199-372 (IKLA…DSAT). GTP-binding positions include 9–16 (GRPNVGKS), 56–60 (DTGGI), 118–121 (NKVD), 205–212 (GKPNVGKS), 252–256 (DTAGV), and 317–320 (NKWD). One can recognise a KH-like domain in the interval 373 to 457 (RRVSTSMLTR…PIQLRFQEGD (85 aa)). The disordered stretch occupies residues 460-488 (FENKTEKLTMSQERRRKRAQSHIKDRKTK). Residues 473–488 (RRRKRAQSHIKDRKTK) are compositionally biased toward basic residues.

Belongs to the TRAFAC class TrmE-Era-EngA-EngB-Septin-like GTPase superfamily. EngA (Der) GTPase family. As to quaternary structure, associates with the 50S ribosomal subunit.

Its function is as follows. GTPase that plays an essential role in the late steps of ribosome biogenesis. In Shewanella baltica (strain OS223), this protein is GTPase Der.